A 905-amino-acid polypeptide reads, in one-letter code: DNA-directed RNA polymerase subunit Rpo1N (905 aa).

Cys60, Cys63, Cys70, His73, Cys100, Cys103, Cys147, and Cys150 together coordinate Zn(2+). 3 residues coordinate Mg(2+): Asp461, Asp463, and Asp465.

Belongs to the RNA polymerase beta' chain family. Part of the RNA polymerase complex. It depends on Mg(2+) as a cofactor. Zn(2+) is required as a cofactor.

Its subcellular location is the cytoplasm. The catalysed reaction is RNA(n) + a ribonucleoside 5'-triphosphate = RNA(n+1) + diphosphate. DNA-dependent RNA polymerase (RNAP) catalyzes the transcription of DNA into RNA using the four ribonucleoside triphosphates as substrates. Forms the clamp head domain. This chain is DNA-directed RNA polymerase subunit Rpo1N, found in Thermococcus celer.